The following is an 88-amino-acid chain: Small ribosomal subunit protein bS20 (88 aa).

It belongs to the bacterial ribosomal protein bS20 family.

In terms of biological role, binds directly to 16S ribosomal RNA. This chain is Small ribosomal subunit protein bS20, found in Bartonella tribocorum (strain CIP 105476 / IBS 506).